The primary structure comprises 201 residues: Probable GTP-binding protein EngB (201 aa).

The region spanning 22–195 (TQPEFAFAGK…WRCIEQFLEV (174 aa)) is the EngB-type G domain. GTP contacts are provided by residues 30–37 (GKSNVGKS), 57–61 (GKTQT), 75–78 (DLPG), 142–145 (TKLD), and 174–176 (FSS). The Mg(2+) site is built by Ser-37 and Thr-59.

Belongs to the TRAFAC class TrmE-Era-EngA-EngB-Septin-like GTPase superfamily. EngB GTPase family. Requires Mg(2+) as cofactor.

In terms of biological role, necessary for normal cell division and for the maintenance of normal septation. This chain is Probable GTP-binding protein EngB, found in Lachnoclostridium phytofermentans (strain ATCC 700394 / DSM 18823 / ISDg) (Clostridium phytofermentans).